We begin with the raw amino-acid sequence, 619 residues long: MALLQIAEPGQSAAPHQHRLAVGIDLGTTNSLVAAVRSGEARTLADAQGRHSLPSIVRYAKEGISVGQEAELHSATDAANTIVSVKRFMGRSLADIEAGSQRFPYQFSASENGLPLFNTPQGQVNPVQVSAEILRPLIARAEDTLGGSLEGAVITVPAYFDDAQRQGTKDAAQLLGVKVLRLLNEPTAAAIAYGLDSGQEGVIAVYDLGGGTFDISILRLNRGVFEVLATGGDSALGGDDFDHLLGGYLAQQWGLDLADTGLGRKLMIEARRVKEALTETDTVTATLEYQGQAYHHDIDRGTFDALIAALVKKTIAACRRALRDAGIDAGEVLETVMVGGSTRVPLVRSEVEAFFGKAPLTSIDPDRVVAIGAAIQADILVGNKPESDLLLLDVIPLSLGIETMGGLVEKIVSRNTTIPVARAQEFTTFKDGQTAMAFHVVQGERELVQDCRSLARFTLKGIPPLAAGAAHIRVTFQVDADGLLSVTAMEKSTGVKSSIQVKPSFGLSDTEIATMLKDSMKHAKEDISRRMLAEQQVEAARVLESLHSALAKDKVLLSEEELNDITAAMAELAEVAKGDDADAILAAIERLDNQTQEFAAKRMDNSIRNALKGQSVDTI.

Belongs to the heat shock protein 70 family.

Functionally, chaperone involved in the maturation of iron-sulfur cluster-containing proteins. Has a low intrinsic ATPase activity which is markedly stimulated by HscB. The chain is Chaperone protein HscA homolog from Shewanella amazonensis (strain ATCC BAA-1098 / SB2B).